The sequence spans 304 residues: tRNA-uridine aminocarboxypropyltransferase 1 (304 aa).

Ser-2 carries the N-acetylserine modification. The DXTW signature appears at Asp-206 to Trp-209.

Belongs to the TDD superfamily. DTWD1 family.

The protein localises to the nucleus. The enzyme catalyses a uridine in tRNA + S-adenosyl-L-methionine = a 3-[(3S)-3-amino-3-carboxypropyl]uridine in tRNA + S-methyl-5'-thioadenosine + H(+). Catalyzes the formation of 3-(3-amino-3-carboxypropyl)uridine (acp3U) at position 20 in the D-loop of several cytoplasmic tRNAs (acp3U(20)). In Homo sapiens (Human), this protein is tRNA-uridine aminocarboxypropyltransferase 1.